A 298-amino-acid chain; its full sequence is Lipoyl synthase (298 aa).

7 residues coordinate [4Fe-4S] cluster: cysteine 40, cysteine 45, cysteine 51, cysteine 67, cysteine 71, cysteine 74, and serine 280. Positions alanine 53–serine 269 constitute a Radical SAM core domain.

This sequence belongs to the radical SAM superfamily. Lipoyl synthase family. Requires [4Fe-4S] cluster as cofactor.

It is found in the cytoplasm. The enzyme catalyses [[Fe-S] cluster scaffold protein carrying a second [4Fe-4S](2+) cluster] + N(6)-octanoyl-L-lysyl-[protein] + 2 oxidized [2Fe-2S]-[ferredoxin] + 2 S-adenosyl-L-methionine + 4 H(+) = [[Fe-S] cluster scaffold protein] + N(6)-[(R)-dihydrolipoyl]-L-lysyl-[protein] + 4 Fe(3+) + 2 hydrogen sulfide + 2 5'-deoxyadenosine + 2 L-methionine + 2 reduced [2Fe-2S]-[ferredoxin]. Its pathway is protein modification; protein lipoylation via endogenous pathway; protein N(6)-(lipoyl)lysine from octanoyl-[acyl-carrier-protein]. Catalyzes the radical-mediated insertion of two sulfur atoms into the C-6 and C-8 positions of the octanoyl moiety bound to the lipoyl domains of lipoate-dependent enzymes, thereby converting the octanoylated domains into lipoylated derivatives. This is Lipoyl synthase from Bacillus cereus (strain ATCC 10987 / NRS 248).